The following is a 465-amino-acid chain: UDP-N-acetylmuramate--L-alanine ligase (465 aa).

112–118 is a binding site for ATP; the sequence is GTHGKTT.

Belongs to the MurCDEF family.

The protein localises to the cytoplasm. The enzyme catalyses UDP-N-acetyl-alpha-D-muramate + L-alanine + ATP = UDP-N-acetyl-alpha-D-muramoyl-L-alanine + ADP + phosphate + H(+). The protein operates within cell wall biogenesis; peptidoglycan biosynthesis. Functionally, cell wall formation. This Burkholderia cenocepacia (strain HI2424) protein is UDP-N-acetylmuramate--L-alanine ligase.